The following is a 327-amino-acid chain: Aspartate--ammonia ligase (327 aa).

This sequence belongs to the class-II aminoacyl-tRNA synthetase family. AsnA subfamily.

The protein localises to the cytoplasm. It carries out the reaction L-aspartate + NH4(+) + ATP = L-asparagine + AMP + diphosphate + H(+). Its pathway is amino-acid biosynthesis; L-asparagine biosynthesis; L-asparagine from L-aspartate (ammonia route): step 1/1. In Bacillus cytotoxicus (strain DSM 22905 / CIP 110041 / 391-98 / NVH 391-98), this protein is Aspartate--ammonia ligase.